Reading from the N-terminus, the 212-residue chain is MSLFDKKHLVTQADALPGRNTPMPIATLHAVNEHSMTNVPAGMEIAYFAMGCFWGVERLFWQLPGVYSTAAGYAGGYTPNPTYREVCSGQTGHAEAVRIVYDPAVISYEQLLQTFWENHDPTQGMQQGNDHGTQYRSAIYPLTPEQNAAAHASRERFQSAMTAAGDHRPITTEIAHATPFYYAEDEHQQYLHKNPYGYCGIGGIGVCLPPDA.

Cys-52 is an active-site residue.

The protein belongs to the MsrA Met sulfoxide reductase family.

The catalysed reaction is L-methionyl-[protein] + [thioredoxin]-disulfide + H2O = L-methionyl-(S)-S-oxide-[protein] + [thioredoxin]-dithiol. It carries out the reaction [thioredoxin]-disulfide + L-methionine + H2O = L-methionine (S)-S-oxide + [thioredoxin]-dithiol. Its function is as follows. Has an important function as a repair enzyme for proteins that have been inactivated by oxidation. Catalyzes the reversible oxidation-reduction of methionine sulfoxide in proteins to methionine. The chain is Peptide methionine sulfoxide reductase MsrA from Salmonella newport (strain SL254).